The following is a 162-amino-acid chain: Protein A49 (162 aa).

It belongs to the poxviridae A49 protein family.

This is Protein A49 from Homo sapiens (Human).